Here is a 201-residue protein sequence, read N- to C-terminus: 3-isopropylmalate dehydratase small subunit (201 aa).

The protein belongs to the LeuD family. LeuD type 1 subfamily. Heterodimer of LeuC and LeuD.

It carries out the reaction (2R,3S)-3-isopropylmalate = (2S)-2-isopropylmalate. The protein operates within amino-acid biosynthesis; L-leucine biosynthesis; L-leucine from 3-methyl-2-oxobutanoate: step 2/4. In terms of biological role, catalyzes the isomerization between 2-isopropylmalate and 3-isopropylmalate, via the formation of 2-isopropylmaleate. This is 3-isopropylmalate dehydratase small subunit from Shewanella baltica (strain OS223).